Consider the following 637-residue polypeptide: PTS system mannitol-specific EIICBA component (637 aa).

Over 1 to 23 (MSSDIKIKVQSFGRFLSNMVMPN) the chain is Cytoplasmic. One can recognise a PTS EIIC type-2 domain in the interval 12 to 341 (FGRFLSNMVM…ILLKTSKVKE (330 aa)). Residues 24–45 (IGAFIAWGIITALFIPTGWLPN) form a helical membrane-spanning segment. Residues 46-49 (ETLA) lie on the Periplasmic side of the membrane. A helical membrane pass occupies residues 50–70 (KLVGPMITYLLPLLIGYTGGK). Topologically, residues 71-133 (LVGGERGGVV…SGFEMLVNNF (63 aa)) are cytoplasmic. The chain crosses the membrane as a helical span at residues 134–155 (SAGIIGMILAILAFLGIGPIVE). Residues 156 to 164 (ALSKMLAAG) lie on the Periplasmic side of the membrane. Residues 165-185 (VNFMVVHDMLPLASIFVEPAK) form a helical membrane-spanning segment. At 186–272 (ILFLNNAINH…VLMNPRLILA (87 aa)) the chain is on the cytoplasmic side. A helical membrane pass occupies residues 273–292 (VILGGMTGVFTLTILGGGLV). Over 293–312 (SPASPGSILAVLAMTPKGAY) the chain is Periplasmic. A helical membrane pass occupies residues 313–334 (FANIAGVCAAMAVSFVVSAILL). At 335-637 (KTSKVKEEDD…EVLELLAGRK (303 aa)) the chain is on the cytoplasmic side. Positions 378-473 (RKIIVACDAG…RLVAAQRHTA (96 aa)) constitute a PTS EIIB type-2 domain. Cys-384 serves as the catalytic Phosphocysteine intermediate; for EIIB activity. Cys-384 is subject to Phosphocysteine; by EIIA. The region spanning 494–636 (FKLGAENIFL…DEVLELLAGR (143 aa)) is the PTS EIIA type-2 domain. His-554 functions as the Tele-phosphohistidine intermediate; for EIIA activity in the catalytic mechanism. Residue His-554 is modified to Phosphohistidine; by HPr.

As to quaternary structure, homodimer. An intramolecular phosphotransfer takes places between His-554 and Cys-384.

Its subcellular location is the cell inner membrane. It carries out the reaction D-mannitol(out) + N(pros)-phospho-L-histidyl-[protein] = D-mannitol 1-phosphate(in) + L-histidyl-[protein]. Its function is as follows. The phosphoenolpyruvate-dependent sugar phosphotransferase system (sugar PTS), a major carbohydrate active transport system, catalyzes the phosphorylation of incoming sugar substrates concomitantly with their translocation across the cell membrane. This system is involved in D-mannitol transport. Also able to use D-mannonic acid. In Escherichia coli (strain K12), this protein is PTS system mannitol-specific EIICBA component.